We begin with the raw amino-acid sequence, 372 residues long: L-selectin (372 aa).

An N-terminal signal peptide occupies residues 1-28; the sequence is MIFPRKCQSTQRDLWNIFKLWGWTMLCC. A propeptide spanning residues 29 to 38 is cleaved from the precursor; the sequence is DFLAHHGTDC. Residues 39 to 332 are Extracellular-facing; sequence WTYHYSENPM…FSMIKEGDYN (294 aa). In terms of domain architecture, C-type lectin spans 55 to 155; that stretch reads RFCRENYTDL…ACHKPKAALC (101 aa). 10 cysteine pairs are disulfide-bonded: Cys-57–Cys-155, Cys-128–Cys-147, Cys-128–Cys-160, Cys-160–Cys-171, Cys-165–Cys-180, Cys-182–Cys-191, Cys-197–Cys-241, Cys-227–Cys-254, Cys-259–Cys-303, and Cys-289–Cys-316. 2 N-linked (GlcNAc...) asparagine glycosylation sites follow: Asn-60 and Asn-104. The Ca(2+) site is built by Glu-118, Asn-120, Glu-126, Asn-143, and Asp-144. Positions 156-192 constitute an EGF-like domain; that stretch reads YTASCQPWSCSGHGECVEIINNYTCNCDVGYYGPQCQ. Residue Asn-177 is glycosylated (N-linked (GlcNAc...) asparagine). Sushi domains follow at residues 195-256 and 257-318; these read IQCE…TCQV and IQCE…ICQK. Residues Asn-226, Asn-232, Asn-246, and Asn-271 are each glycosylated (N-linked (GlcNAc...) asparagine). Residues 333-355 form a helical membrane-spanning segment; sequence PLFIPVAVIVTAFSGLAFIIWLA. The Cytoplasmic portion of the chain corresponds to 356–372; sequence RRLKKGKKSKKSMDDPY.

The protein belongs to the selectin/LECAM family. Interaction with SELPLG/PSGL1 and PODXL2 is required for promoting recruitment and rolling of leukocytes. This interaction is dependent on the sialyl Lewis X glycan modification of SELPLG and PODXL2, and tyrosine sulfation modifications of SELPLG. Sulfation on 'Tyr-51' of SELPLG is important for L-selectin binding. Post-translationally, N-glycosylated.

Its subcellular location is the cell membrane. Calcium-dependent lectin that mediates cell adhesion by binding to glycoproteins on neighboring cells. Mediates the adherence of lymphocytes to endothelial cells of high endothelial venules in peripheral lymph nodes. Promotes initial tethering and rolling of leukocytes in endothelia. The protein is L-selectin (SELL) of Papio hamadryas (Hamadryas baboon).